A 277-amino-acid chain; its full sequence is Thymidylate synthase (277 aa).

Arginine 21 is a dUMP binding site. Histidine 51 lines the (6R)-5,10-methylene-5,6,7,8-tetrahydrofolate pocket. 139 to 140 is a binding site for dUMP; sequence RR. Residue cysteine 159 is the Nucleophile of the active site. DUMP-binding positions include 179–182, asparagine 190, and 220–222; these read RSAD and HIY. Aspartate 182 contacts (6R)-5,10-methylene-5,6,7,8-tetrahydrofolate. (6R)-5,10-methylene-5,6,7,8-tetrahydrofolate is bound at residue alanine 276.

This sequence belongs to the thymidylate synthase family. Bacterial-type ThyA subfamily. As to quaternary structure, homodimer.

The protein localises to the cytoplasm. It carries out the reaction dUMP + (6R)-5,10-methylene-5,6,7,8-tetrahydrofolate = 7,8-dihydrofolate + dTMP. It functions in the pathway pyrimidine metabolism; dTTP biosynthesis. In terms of biological role, catalyzes the reductive methylation of 2'-deoxyuridine-5'-monophosphate (dUMP) to 2'-deoxythymidine-5'-monophosphate (dTMP) while utilizing 5,10-methylenetetrahydrofolate (mTHF) as the methyl donor and reductant in the reaction, yielding dihydrofolate (DHF) as a by-product. This enzymatic reaction provides an intracellular de novo source of dTMP, an essential precursor for DNA biosynthesis. This Roseobacter denitrificans (strain ATCC 33942 / OCh 114) (Erythrobacter sp. (strain OCh 114)) protein is Thymidylate synthase.